Reading from the N-terminus, the 228-residue chain is Deoxyribose-phosphate aldolase (228 aa).

Asp93 acts as the Proton donor/acceptor in catalysis. The active-site Schiff-base intermediate with acetaldehyde is the Lys159. Lys188 serves as the catalytic Proton donor/acceptor.

This sequence belongs to the DeoC/FbaB aldolase family. DeoC type 1 subfamily.

Its subcellular location is the cytoplasm. It catalyses the reaction 2-deoxy-D-ribose 5-phosphate = D-glyceraldehyde 3-phosphate + acetaldehyde. It participates in carbohydrate degradation; 2-deoxy-D-ribose 1-phosphate degradation; D-glyceraldehyde 3-phosphate and acetaldehyde from 2-deoxy-alpha-D-ribose 1-phosphate: step 2/2. Catalyzes a reversible aldol reaction between acetaldehyde and D-glyceraldehyde 3-phosphate to generate 2-deoxy-D-ribose 5-phosphate. This chain is Deoxyribose-phosphate aldolase, found in Carboxydothermus hydrogenoformans (strain ATCC BAA-161 / DSM 6008 / Z-2901).